The following is an 84-amino-acid chain: Putative membrane protein insertion efficiency factor (84 aa).

It belongs to the UPF0161 family.

The protein resides in the cell inner membrane. Functionally, could be involved in insertion of integral membrane proteins into the membrane. The chain is Putative membrane protein insertion efficiency factor from Shewanella loihica (strain ATCC BAA-1088 / PV-4).